The primary structure comprises 350 residues: MTYFIDVPTMSDLVHDIGVAPFIGELAAALRDDFKRWQAFDKSARVASHSEVGVIELMPVADKSRYAFKYVNGHPANTARNLHTVMAFGVLADVDSGYPVLLSELTIATALRTAATSLMAAQALARPNARKMALIGNGAQSEFQALAFHKHLGIEEIVAYDTDPLATAKLIANLKEYSGLTIRRASSVAEAVKGVDIITTVTADKAYATIITPDMLEPGMHLNAVGGDCPGKTELHADVLRNARVFVEYEPQTRIEGEIQQLPADFPVVDLWRVLRGETEGRQSDSQVTVFDSVGFALEDYTVLRYVLQQAEKRGMGTKIDLVPWVEDDPKDLFSHTRGRAGKRRIRRVA.

2 residues coordinate L-ornithine: arginine 45 and lysine 69. Residues threonine 84, arginine 112, 139–140, aspartate 161, threonine 202, 225–228, lysine 232, and serine 293 contribute to the NAD(+) site; these read AQ and VGGD. Residue arginine 112 coordinates L-ornithine. Residue aspartate 228 participates in L-ornithine binding. The active-site Proton donor/acceptor is the aspartate 228. Position 294 (valine 294) interacts with L-ornithine. Residue lysine 331 coordinates NAD(+).

The protein belongs to the ornithine cyclodeaminase/mu-crystallin family. As to quaternary structure, homodimer. Requires NAD(+) as cofactor.

The enzyme catalyses L-ornithine = L-proline + NH4(+). It participates in amino-acid biosynthesis; L-proline biosynthesis; L-proline from L-ornithine: step 1/1. Its function is as follows. Catalyzes the conversion of L-ornithine into L-proline with release of ammonia. Is likely involved in the L-ornithine degradation pathway that allows P.putida to utilize this compound as sole carbon and nitrogen source. The protein is Ornithine cyclodeaminase of Pseudomonas putida (strain ATCC 47054 / DSM 6125 / CFBP 8728 / NCIMB 11950 / KT2440).